Consider the following 335-residue polypeptide: Mesoderm-specific transcript protein (335 aa).

Helical transmembrane passes span 13–33 (WWVQ…HIPP) and 63–83 (VGVV…TSSY). The 240-residue stretch at 71–310 (IVVLLHGFPT…PRSTVSILDD (240 aa)) folds into the AB hydrolase-1 domain. The short motif at 98–103 (RVIALD) is the RVIALD element. N-linked (GlcNAc...) asparagine glycosylation occurs at Asn163. Residues 266–286 (VGALASVSIPIHFIYGPLDPI) form a helical membrane-spanning segment.

It belongs to the AB hydrolase superfamily. In terms of tissue distribution, expressed in mesodermal tissues. Isoform 1 is exclusively expressed from the paternal allele in all fetal tissues and cell lines examined, whereas isoform 2 is preferentially expressed from the paternal allele in a tissue-type-specific manner.

Its subcellular location is the endoplasmic reticulum membrane. The chain is Mesoderm-specific transcript protein (Mest) from Mus musculus (Mouse).